A 404-amino-acid chain; its full sequence is MKLPIYLDYSATTPVDPRVAQKMCECLTMEGNFGNPASRSHVFGWKAEEAVENARRQVAELVNADPREIVWTSGATESDNLAIKGVAHFNASKGKHIITSKIEHKAVLDTTRQLEREGFEVTYLEPGEDGLITPAMVAAALREDTILVSVMHVNNEIGTVNDIAAIGELTRSRGVLYHVDAAQSTGKVAIDLERMKVDLMSFSAHKTYGPKGIGALYVRRKPRVRLEAQMHGGGHERGMRSGTLATHQIVGMGEAFRIAREEMAAESRRIAGLSHRFHEQVSTLEEVYLNGSATARVPHNLNLSFNYVEGESLIMSLRDLAVSSGSACTSASLEPSYVLRALGRNDELAHSSIRFTFGRFTTEEEVDYAARKVCEAVGKLRELSPLWDMYKDGVDLSKIEWQAH.

Residues 75–76 (AT), Asn155, Gln183, and 203–205 (SAH) contribute to the pyridoxal 5'-phosphate site. Lys206 is subject to N6-(pyridoxal phosphate)lysine. Residue Thr243 coordinates pyridoxal 5'-phosphate. Catalysis depends on Cys328, which acts as the Cysteine persulfide intermediate. Residue Cys328 participates in [2Fe-2S] cluster binding.

It belongs to the class-V pyridoxal-phosphate-dependent aminotransferase family. NifS/IscS subfamily. Homodimer. Forms a heterotetramer with IscU, probably interacts with other sulfur acceptors. Pyridoxal 5'-phosphate serves as cofactor.

Its subcellular location is the cytoplasm. It carries out the reaction (sulfur carrier)-H + L-cysteine = (sulfur carrier)-SH + L-alanine. It participates in cofactor biosynthesis; iron-sulfur cluster biosynthesis. With respect to regulation, inhibited by equimolar N-iodoacetyl-N'-(5-sulfo-1-naphthyl)ethylenediamine. Its function is as follows. Master enzyme that delivers sulfur to a number of partners involved in Fe-S cluster assembly, tRNA modification or cofactor biosynthesis. Catalyzes the removal of elemental sulfur from cysteine to produce alanine via an enzyme-bound persulfide intermediate. Functions as a sulfur delivery protein for Fe-S cluster synthesis. Cluster assembly on IscU homodimers proceeds sequentially from 1 2Fe-2S per dimer, to 2 2Fe-2S per dimer and finally 1 4Fe-4S per dimer. The protein is Cysteine desulfurase IscS of Azotobacter vinelandii.